The sequence spans 509 residues: Ribonuclease Y (509 aa).

Residues 3 to 23 (WILYVILPAVCIILGWTIRWL) traverse the membrane as a helical segment. The region spanning 199-284 (TVSTVSLPSD…EIVQKVTREI (86 aa)) is the KH domain. Residues 325–418 (VLQHSKEVAI…VQIADAISAA (94 aa)) enclose the HD domain.

The protein belongs to the RNase Y family.

It is found in the cell membrane. Its function is as follows. Endoribonuclease that initiates mRNA decay. This chain is Ribonuclease Y, found in Treponema denticola (strain ATCC 35405 / DSM 14222 / CIP 103919 / JCM 8153 / KCTC 15104).